A 216-amino-acid polypeptide reads, in one-letter code: uncharacterized protein (216 aa).

This sequence belongs to the channel forming colicin family.

This is an uncharacterized protein from Escherichia coli.